We begin with the raw amino-acid sequence, 782 residues long: MDEDEIELTPEEEKSFFDGIGADAVHMDSDQIVVEVQETVFLANSDVTVHNFVPDNPGSVIIQDVIENVLIEDVHCSHILEETDISDNVIIPEQVLNLGTAEEVSLAQFLIPDILTSGITSTSLTMPEHVLMSEAIHVSDVGHFEQVIHDSLVETEVITDPITADTSDILVADCVSEAVLDSSGMPLEQQDNDKINCEDYLMMSLDEPSKADLEGSSEVTMNAESGTDSSKLDEASPEVIKVCILKADSEVDELGETIHAVESETKNGNEAEVTDQSTSIRVPRVNIYMSASDSQKEEEDTEVIVGDEDAGGTAADTPEHEQQMDVSEIKAAFLPIAWTAAYDNNSDEIEDQNVTASALLNQDESGGLDRVPKQKSKKKKRPESKQYQSAIFVAPDGQTLRVYPCMFCGKKFKTKRFLKRHTKNHPEYLANKKYHCTECDYSTNKKISLHNHMESHKLTIKTEKTTECDDCRKNLSHAGTLCTHKTMHTEKGVNKTCKCKFCDYETAEQTLLNHHLLVVHRKKFPHICGECGKGFRHPSALKKHIRVHTGEKPYECQYCEYKSADSSNLKTHIKSKHSKEIPLKCGICLLTFSDNKEAQQHAVLHQESRTHQCSHCNHKSSNSSDLKRHIISVHTKAYPHKCDMCSKGFHRPSELKKHVATHKSKKMHQCRHCDFNSPDPFLLSHHILSAHTKNVPFKCKRCKKEFQQQCELQTHMKTHSSRKVYQCEYCEYSTKDASGFKRHVISIHTKDYPHSCDFCKKGFRRPSEKNQHIMRHHKVGLP.

2 disordered regions span residues A211–D233 and L360–Q386. Residues S217–S229 are compositionally biased toward polar residues. Positions P372–P382 match the Nuclear localization signal motif. Residues K373 to P382 are compositionally biased toward basic residues. 13 C2H2-type zinc fingers span residues Y403–H425, Y434–H456, T466–H488, C497–H520, H526–H548, Y554–H577, L583–H605, H611–H634, H640–H662, H668–H691, F697–H719, Y725–H748, and H754–H777.

It belongs to the krueppel C2H2-type zinc-finger protein family. ZFX/ZFY subfamily.

It localises to the nucleus. Probable transcriptional activator. Binds to the consensus sequence 5'-AGGCCY-3'. This chain is Zinc finger Y-chromosomal protein 1 (Zfy1), found in Mus musculus (Mouse).